A 283-amino-acid polypeptide reads, in one-letter code: MLIQAVGVNLPPSYVCLEGPLGGERPRAQGDEMLMQRLLPAVREALDEAAVKPEEIDLIVGLALSPDHLIENRDIMAPKIGHPLQKVLGANRAHVFDLTDSSLARALYVVDTLASDQGYRNVLVVRGESSQGLEVDSESGFALADGALALLCRPTGKAAFRRGALGGDPAQEWLPLSIPLNTDIRQVGDVKGHLNLPAQPGLPEAVRAGFTRLAGDFPQLNWVREEWFGQGRPDGRCLGPFELASQLRAAQRDRLDELLLISFDPFGMVVEGVTLELAGEAHA.

The protein belongs to the thiolase-like superfamily. FabH family. As to quaternary structure, forms a tight complex with PqsC.

It localises to the cytoplasm. Activity of the complex is inhibited by 2-aminoacetophenone (2-AA). Its function is as follows. Required for the biosynthesis of the quorum-sensing signaling molecules 2-heptyl-4(1H)-quinolone (HHQ) and 2-heptyl-3-hydroxy-4(1H)-quinolone (Pseudomonas quinolone signal or PQS), which are important for biofilm formation and virulence. The PqsC/PqsB complex catalyzes the condensation of 2-aminobenzoylacetate (2-ABA) and octanoyl-CoA to form HHQ. PqsB, together with PqsC, catalyzes the coupling of 2-ABA with the octanoate group, leading to decarboxylation and dehydration, and resulting in closure of the quinoline ring. PqsB is probably required for the proper folding of PqsC rather than for a direct enzymatic role in the process. The protein is 2-heptyl-4(1H)-quinolone synthase subunit PqsB of Pseudomonas aeruginosa (strain ATCC 15692 / DSM 22644 / CIP 104116 / JCM 14847 / LMG 12228 / 1C / PRS 101 / PAO1).